Here is a 107-residue protein sequence, read N- to C-terminus: uncharacterized protein (107 aa).

The helical transmembrane segment at 25 to 42 (LSLCSVLLSWLICAMCLW) threads the bilayer.

It localises to the host membrane. This is an uncharacterized protein from Galliformes (FAdV-1).